The sequence spans 310 residues: B3 domain-containing transcription factor NGA1 (310 aa).

Residues 1-26 (MMTDLSLTRDEDEEEAKPLAEEEGAR) form a disordered region. Basic and acidic residues predominate over residues 16-26 (AKPLAEEEGAR). Positions 35–141 (FDKVVTPSDV…RLFIDWRRRP (107 aa)) form a DNA-binding region, TF-B3. The segment covering 251-268 (ESGMTNSTEEESSSSGGS) has biased composition (low complexity). The interval 251 to 310 (ESGMTNSTEEESSSSGGSLPRGGGGGASSSSFFQLRLGSSSEDDHFTKKGKSSLSFDLDQ) is disordered.

In terms of assembly, interacts with BRX. Interacts with BZIP30.

The protein localises to the nucleus. Functionally, regulates lateral organ growth. Functionally redundant with NGA2, NGA3 and NGA4. The polypeptide is B3 domain-containing transcription factor NGA1 (NGA1) (Arabidopsis thaliana (Mouse-ear cress)).